A 67-amino-acid polypeptide reads, in one-letter code: Protein AaeX (67 aa).

The next 2 membrane-spanning stretches (helical) occupy residues 3–23 (VLPVFVMFGLSFPPVFIELII) and 43–63 (LVWHPALFNTALYCCVFYLVS).

It belongs to the AaeX family.

Its subcellular location is the cell membrane. The sequence is that of Protein AaeX from Pantoea vagans (strain C9-1) (Pantoea agglomerans (strain C9-1)).